Consider the following 282-residue polypeptide: Pyrroline-5-carboxylate reductase (282 aa).

Belongs to the pyrroline-5-carboxylate reductase family.

The catalysed reaction is L-proline + NADP(+) = (S)-1-pyrroline-5-carboxylate + NADPH + 2 H(+). The enzyme catalyses L-proline + NAD(+) = (S)-1-pyrroline-5-carboxylate + NADH + 2 H(+). Its pathway is amino-acid biosynthesis; L-proline biosynthesis; L-proline from L-glutamate 5-semialdehyde: step 1/1. The chain is Pyrroline-5-carboxylate reductase (pro3) from Schizosaccharomyces pombe (strain 972 / ATCC 24843) (Fission yeast).